A 126-amino-acid chain; its full sequence is Profilin-3 (126 aa).

It belongs to the profilin family. In terms of assembly, occurs in many kinds of cells as a complex with monomeric actin in a 1:1 ratio. In embryos, expression is specifically detected in body wall muscle cells. In adults, expression is localized to a striking dot-like fashion in body wall muscle.

The protein resides in the cytoplasm. It localises to the cytoskeleton. Its function is as follows. Binds to actin and affects the structure of the cytoskeleton. At high concentrations, profilin prevents the polymerization of actin, whereas it enhances it at low concentrations. By binding to PIP2, it inhibits the formation of IP3 and DG. Also binds to poly(L-proline) and phosphatidylinositol 4,5-bisphosphate micelles. This Caenorhabditis elegans protein is Profilin-3 (pfn-3).